The chain runs to 205 residues: Holliday junction branch migration complex subunit RuvA (205 aa).

Residues 1–64 (MIGKLKGLID…EDQIKLFGFR (64 aa)) form a domain I region. Residues 65-143 (SDLEREWFRL…GFASVDPAVA (79 aa)) are domain II. Residues 144-153 (HLSGAIEERS) are flexible linker. The tract at residues 153-205 (SAPRPVADAISALVNLGYGQPQAAAAIAAAARSAGDAAQTAQLIKLGLKELSK) is domain III.

Belongs to the RuvA family. As to quaternary structure, homotetramer. Forms an RuvA(8)-RuvB(12)-Holliday junction (HJ) complex. HJ DNA is sandwiched between 2 RuvA tetramers; dsDNA enters through RuvA and exits via RuvB. An RuvB hexamer assembles on each DNA strand where it exits the tetramer. Each RuvB hexamer is contacted by two RuvA subunits (via domain III) on 2 adjacent RuvB subunits; this complex drives branch migration. In the full resolvosome a probable DNA-RuvA(4)-RuvB(12)-RuvC(2) complex forms which resolves the HJ.

Its subcellular location is the cytoplasm. Functionally, the RuvA-RuvB-RuvC complex processes Holliday junction (HJ) DNA during genetic recombination and DNA repair, while the RuvA-RuvB complex plays an important role in the rescue of blocked DNA replication forks via replication fork reversal (RFR). RuvA specifically binds to HJ cruciform DNA, conferring on it an open structure. The RuvB hexamer acts as an ATP-dependent pump, pulling dsDNA into and through the RuvAB complex. HJ branch migration allows RuvC to scan DNA until it finds its consensus sequence, where it cleaves and resolves the cruciform DNA. In Rhodopseudomonas palustris (strain BisA53), this protein is Holliday junction branch migration complex subunit RuvA.